A 398-amino-acid chain; its full sequence is Protochlorophyllide reductase, chloroplastic (398 aa).

This sequence belongs to the short-chain dehydrogenases/reductases (SDR) family. POR subfamily.

Its subcellular location is the plastid. The protein resides in the chloroplast. It carries out the reaction chlorophyllide a + NADP(+) = protochlorophyllide a + NADPH + H(+). Its pathway is porphyrin-containing compound metabolism; chlorophyll biosynthesis. Its function is as follows. Phototransformation of protochlorophyllide (Pchlide) to chlorophyllide (Chlide). This is Protochlorophyllide reductase, chloroplastic (POR1) from Daucus carota (Wild carrot).